Consider the following 473-residue polypeptide: GTPase Der (473 aa).

EngA-type G domains follow at residues 3–166 (PVIA…ENPE) and 177–350 (IRIG…ESAM). GTP contacts are provided by residues 9 to 16 (GRPNVGKS), 56 to 60 (DTGGL), 118 to 121 (NKTD), 183 to 190 (GRPNVGKS), 230 to 234 (DTAGV), and 295 to 298 (NKWD). The KH-like domain maps to 351-435 (SKWPTNRLTA…PIRFEFKSGE (85 aa)). Basic and acidic residues predominate over residues 444–458 (RLTPRQKVKKDNDLK). Residues 444-473 (RLTPRQKVKKDNDLKKGRRIKKTRQKSVKR) form a disordered region. A compositionally biased stretch (basic residues) spans 459-473 (KGRRIKKTRQKSVKR).

The protein belongs to the TRAFAC class TrmE-Era-EngA-EngB-Septin-like GTPase superfamily. EngA (Der) GTPase family. Associates with the 50S ribosomal subunit.

GTPase that plays an essential role in the late steps of ribosome biogenesis. The sequence is that of GTPase Der from Marinobacter nauticus (strain ATCC 700491 / DSM 11845 / VT8) (Marinobacter aquaeolei).